A 284-amino-acid chain; its full sequence is tRNA pseudouridine synthase A (284 aa).

The active-site Nucleophile is the D52. Position 149 (Y149) interacts with substrate.

Belongs to the tRNA pseudouridine synthase TruA family. Homodimer.

The enzyme catalyses uridine(38/39/40) in tRNA = pseudouridine(38/39/40) in tRNA. Formation of pseudouridine at positions 38, 39 and 40 in the anticodon stem and loop of transfer RNAs. In Orientia tsutsugamushi (strain Boryong) (Rickettsia tsutsugamushi), this protein is tRNA pseudouridine synthase A.